Reading from the N-terminus, the 280-residue chain is Urease accessory protein UreD (280 aa).

This sequence belongs to the UreD family. As to quaternary structure, ureD, UreF and UreG form a complex that acts as a GTP-hydrolysis-dependent molecular chaperone, activating the urease apoprotein by helping to assemble the nickel containing metallocenter of UreC. The UreE protein probably delivers the nickel.

It localises to the cytoplasm. Its function is as follows. Required for maturation of urease via the functional incorporation of the urease nickel metallocenter. The polypeptide is Urease accessory protein UreD (Pseudomonas aeruginosa (strain ATCC 15692 / DSM 22644 / CIP 104116 / JCM 14847 / LMG 12228 / 1C / PRS 101 / PAO1)).